Consider the following 381-residue polypeptide: Chymosin (381 aa).

Residues Met1–Ala16 form the signal peptide. Positions Ser17 to Leu58 are cleaved as a propeptide — activation peptide. The 305-residue stretch at Tyr74 to Ala378 folds into the Peptidase A1 domain. Asp92 is a catalytic residue. Residues Cys105 and Cys110 are joined by a disulfide bond. Asn158 carries N-linked (GlcNAc...) asparagine glycosylation. The cysteines at positions 265 and 269 are disulfide-linked. Asp274 is a catalytic residue. A disulfide bridge links Cys308 with Cys341. A glycan (N-linked (GlcNAc...) asparagine) is linked at Asn349.

Belongs to the peptidase A1 family.

The catalysed reaction is Broad specificity similar to that of pepsin A. Clots milk by cleavage of a single 104-Ser-Phe-|-Met-Ala-107 bond in kappa-chain of casein.. Its function is as follows. Chymosin is synthesized in the mucosa of the abomasum (fourth stomach) of young (unweaned) ruminants. The enzyme hydrolyzes casein to paracasein. The polypeptide is Chymosin (Camelus dromedarius (Dromedary)).